We begin with the raw amino-acid sequence, 127 residues long: MSLLKEFKEFAMRGNVMDLAVAVVMGVAFNKIVTALVDGIIMPCVGLLLGGVNIAGLSFTVGDAQIKWGNFLQNVIDFIIVAFAIFVLIKLINLLQRKKANEPEPVTSEIQLLTEIRDLLARNSSKI.

3 helical membrane passes run 9–29, 32–52, and 75–95; these read EFAM…GVAF, IVTA…LGGV, and VIDF…INLL.

It belongs to the MscL family. As to quaternary structure, homopentamer.

Its subcellular location is the cell inner membrane. Its function is as follows. Channel that opens in response to stretch forces in the membrane lipid bilayer. May participate in the regulation of osmotic pressure changes within the cell. The chain is Large-conductance mechanosensitive channel from Legionella pneumophila (strain Corby).